Consider the following 169-residue polypeptide: PTS system glucose-specific EIIA component (169 aa).

Positions 39–143 (DVVFAEKIVG…STLTPVVISN (105 aa)) constitute a PTS EIIA type-1 domain. The Zn(2+) site is built by His76 and His91. His91 functions as the Tele-phosphohistidine intermediate; for EIIA activity in the catalytic mechanism. His91 carries the phosphohistidine; by HPr modification.

In terms of assembly, heterodimer with glycerol kinase (glpk). Requires Zn(2+) as cofactor.

It is found in the cytoplasm. The phosphoenolpyruvate-dependent sugar phosphotransferase system (sugar PTS), a major carbohydrate active transport system, catalyzes the phosphorylation of incoming sugar substrates concomitantly with their translocation across the cell membrane. The enzyme II complex composed of PtsG and Crr is involved in glucose transport. The chain is PTS system glucose-specific EIIA component (crr) from Salmonella typhi.